We begin with the raw amino-acid sequence, 90 residues long: Large ribosomal subunit protein uL23c (90 aa).

Belongs to the universal ribosomal protein uL23 family. In terms of assembly, part of the 50S ribosomal subunit.

It localises to the plastid. Its subcellular location is the chloroplast. In terms of biological role, binds to 23S rRNA. This chain is Large ribosomal subunit protein uL23c (rpl23), found in Tetradesmus obliquus (Green alga).